We begin with the raw amino-acid sequence, 586 residues long: Serine/threonine-protein phosphatase 2A 56 kDa regulatory subunit delta isoform (586 aa).

Positions 1–80 (MSPSPSSSGK…QSSSRFNLSK (80 aa)) are disordered. 6 consecutive repeat copies span residues 21–22 (QP), 23–24 (QP), 25–26 (QP), 27–28 (QP), 29–30 (QP), and 31–32 (QP). The tract at residues 21 to 36 (QPQPQPQPQPQPQSQP) is 8 X 2 AA approximate tandem repeats of Q-P. A compositionally biased stretch (pro residues) spans 23–35 (QPQPQPQPQPQSQ). The stretch at 33-34 (QS) is one 7; approximate repeat. Residues 35–36 (QP) form repeat 8. Low complexity predominate over residues 36–45 (PPSSNKRPSN). Thr47 bears the Phosphothreonine mark. A phosphoserine mark is found at Ser72, Ser73, and Ser74. The SH3-binding; class I signature appears at 507 to 514 (RAPPPLPP). Residues 532–549 (KRTVETEAVQMLKDIKKE) carry the Nuclear localization signal motif. Ser557 and Ser582 each carry phosphoserine.

The protein belongs to the phosphatase 2A regulatory subunit B56 family. In terms of assembly, PP2A consists of a common heterodimeric core enzyme, composed of a 36 kDa catalytic subunit (subunit C) and a 65 kDa constant regulatory subunit (PR65 or subunit A), that associates with a variety of regulatory subunits. Proteins that associate with the core dimer include three families of regulatory subunits B (the R2/B/PR55/B55, R3/B''/PR72/PR130/PR59 and R5/B'/B56 families), the 48 kDa variable regulatory subunit, viral proteins, and cell signaling molecules. Interacts with the PP2A A subunit PPP2R1A. Interacts with SGO1. Interacts with ADCY8. In terms of tissue distribution, highly expressed in brain.

It localises to the nucleus. The B regulatory subunit might modulate substrate selectivity and catalytic activity, and might also direct the localization of the catalytic enzyme to a particular subcellular compartment. This is Serine/threonine-protein phosphatase 2A 56 kDa regulatory subunit delta isoform (PPP2R5D) from Oryctolagus cuniculus (Rabbit).